The following is a 360-amino-acid chain: Phospho-N-acetylmuramoyl-pentapeptide-transferase (360 aa).

10 helical membrane-spanning segments follow: residues 26–46 (AIVS…RMIA), 72–92 (PTMG…LWAY), 94–114 (SNPY…VGFV), 132–152 (WKYF…YMIG), 168–188 (VMPQ…VGTS), 199–219 (GLAI…AWAT), 236–256 (AGEL…FLWF), 263–283 (VFMG…IAVL), 288–308 (FLLV…ILQV), and 338–358 (VIVR…ATLK).

The protein belongs to the glycosyltransferase 4 family. MraY subfamily. Requires Mg(2+) as cofactor.

Its subcellular location is the cell inner membrane. It carries out the reaction UDP-N-acetyl-alpha-D-muramoyl-L-alanyl-gamma-D-glutamyl-meso-2,6-diaminopimeloyl-D-alanyl-D-alanine + di-trans,octa-cis-undecaprenyl phosphate = di-trans,octa-cis-undecaprenyl diphospho-N-acetyl-alpha-D-muramoyl-L-alanyl-D-glutamyl-meso-2,6-diaminopimeloyl-D-alanyl-D-alanine + UMP. It functions in the pathway cell wall biogenesis; peptidoglycan biosynthesis. Catalyzes the initial step of the lipid cycle reactions in the biosynthesis of the cell wall peptidoglycan: transfers peptidoglycan precursor phospho-MurNAc-pentapeptide from UDP-MurNAc-pentapeptide onto the lipid carrier undecaprenyl phosphate, yielding undecaprenyl-pyrophosphoryl-MurNAc-pentapeptide, known as lipid I. The protein is Phospho-N-acetylmuramoyl-pentapeptide-transferase of Erwinia tasmaniensis (strain DSM 17950 / CFBP 7177 / CIP 109463 / NCPPB 4357 / Et1/99).